A 159-amino-acid chain; its full sequence is Large ribosomal subunit protein bL17 (159 aa).

The span at 124–135 (EANRATRAAASK) shows a compositional bias: low complexity. The segment at 124 to 159 (EANRATRAAASKQAEEAKAEEAEATEAEAEETTEEK) is disordered. Over residues 145 to 159 (AEATEAEAEETTEEK) the composition is skewed to acidic residues.

Belongs to the bacterial ribosomal protein bL17 family. Part of the 50S ribosomal subunit. Contacts protein L32.

This Corynebacterium aurimucosum (strain ATCC 700975 / DSM 44827 / CIP 107346 / CN-1) (Corynebacterium nigricans) protein is Large ribosomal subunit protein bL17.